A 305-amino-acid polypeptide reads, in one-letter code: Recombination-associated protein RdgC (305 aa).

The protein belongs to the RdgC family.

It is found in the cytoplasm. Its subcellular location is the nucleoid. In terms of biological role, may be involved in recombination. The protein is Recombination-associated protein RdgC of Sodalis glossinidius (strain morsitans).